The following is an 80-amino-acid chain: Large ribosomal subunit protein bL31B (80 aa).

It belongs to the bacterial ribosomal protein bL31 family. Type B subfamily. In terms of assembly, part of the 50S ribosomal subunit.

The sequence is that of Large ribosomal subunit protein bL31B from Xanthomonas axonopodis pv. citri (strain 306).